The chain runs to 208 residues: Cysteine-rich protein 2 (208 aa).

An LIM zinc-binding 1 domain is found at cysteine 5–cysteine 57. The residue at position 23 (lysine 23) is an N6-acetyllysine. A Phosphoserine modification is found at serine 104. In terms of domain architecture, LIM zinc-binding 2 spans cysteine 126–cysteine 178. N6-acetyllysine is present on residues lysine 138 and lysine 144.

As to quaternary structure, interacts with TGFB1I1.

The sequence is that of Cysteine-rich protein 2 (Crip2) from Mus musculus (Mouse).